We begin with the raw amino-acid sequence, 456 residues long: Bifunctional protein GlmU (456 aa).

The pyrophosphorylase stretch occupies residues 1–229; that stretch reads MLNSAMSVVI…ISETDGVNNR (229 aa). UDP-N-acetyl-alpha-D-glucosamine contacts are provided by residues 11–14, lysine 25, glutamine 76, 81–82, 103–105, glycine 140, glutamate 154, asparagine 169, and asparagine 227; these read LAAG, GT, and YGD. Aspartate 105 contributes to the Mg(2+) binding site. Asparagine 227 contacts Mg(2+). The segment at 230-250 is linker; sequence LQLSRLERIYQAEQAEKLLLS. Residues 251–456 are N-acetyltransferase; that stretch reads GVMLRDPARF…QGWQRPVKKK (206 aa). Residues arginine 333 and lysine 351 each contribute to the UDP-N-acetyl-alpha-D-glucosamine site. Catalysis depends on histidine 363, which acts as the Proton acceptor. Residues tyrosine 366 and asparagine 377 each coordinate UDP-N-acetyl-alpha-D-glucosamine. Residues alanine 380, 386-387, serine 405, alanine 423, and arginine 440 each bind acetyl-CoA; that span reads NY.

It in the N-terminal section; belongs to the N-acetylglucosamine-1-phosphate uridyltransferase family. This sequence in the C-terminal section; belongs to the transferase hexapeptide repeat family. In terms of assembly, homotrimer. The cofactor is Mg(2+).

The protein localises to the cytoplasm. It carries out the reaction alpha-D-glucosamine 1-phosphate + acetyl-CoA = N-acetyl-alpha-D-glucosamine 1-phosphate + CoA + H(+). It catalyses the reaction N-acetyl-alpha-D-glucosamine 1-phosphate + UTP + H(+) = UDP-N-acetyl-alpha-D-glucosamine + diphosphate. The protein operates within nucleotide-sugar biosynthesis; UDP-N-acetyl-alpha-D-glucosamine biosynthesis; N-acetyl-alpha-D-glucosamine 1-phosphate from alpha-D-glucosamine 6-phosphate (route II): step 2/2. It participates in nucleotide-sugar biosynthesis; UDP-N-acetyl-alpha-D-glucosamine biosynthesis; UDP-N-acetyl-alpha-D-glucosamine from N-acetyl-alpha-D-glucosamine 1-phosphate: step 1/1. Its pathway is bacterial outer membrane biogenesis; LPS lipid A biosynthesis. In terms of biological role, catalyzes the last two sequential reactions in the de novo biosynthetic pathway for UDP-N-acetylglucosamine (UDP-GlcNAc). The C-terminal domain catalyzes the transfer of acetyl group from acetyl coenzyme A to glucosamine-1-phosphate (GlcN-1-P) to produce N-acetylglucosamine-1-phosphate (GlcNAc-1-P), which is converted into UDP-GlcNAc by the transfer of uridine 5-monophosphate (from uridine 5-triphosphate), a reaction catalyzed by the N-terminal domain. The polypeptide is Bifunctional protein GlmU (Salmonella gallinarum (strain 287/91 / NCTC 13346)).